A 954-amino-acid chain; its full sequence is Valine--tRNA ligase (954 aa).

The 'HIGH' region motif lies at 48–58 (PNVTGSLHMGH). A 'KMSKS' region motif is present at residues 560-564 (KMSKS). Lysine 563 contributes to the ATP binding site. A coiled-coil region spans residues 883 to 953 (AGFINKEAEL…IQEQYKAIEA (71 aa)).

It belongs to the class-I aminoacyl-tRNA synthetase family. ValS type 1 subfamily. Monomer.

The protein localises to the cytoplasm. The catalysed reaction is tRNA(Val) + L-valine + ATP = L-valyl-tRNA(Val) + AMP + diphosphate. In terms of biological role, catalyzes the attachment of valine to tRNA(Val). As ValRS can inadvertently accommodate and process structurally similar amino acids such as threonine, to avoid such errors, it has a 'posttransfer' editing activity that hydrolyzes mischarged Thr-tRNA(Val) in a tRNA-dependent manner. The sequence is that of Valine--tRNA ligase from Haemophilus influenzae (strain 86-028NP).